A 319-amino-acid polypeptide reads, in one-letter code: NADH-quinone oxidoreductase subunit H 1 (319 aa).

The next 8 membrane-spanning stretches (helical) occupy residues 1–21 (MIGLIITATISVTLIMVLLVV), 74–94 (FAYILAPAVAATPVLAGFGVI), 107–127 (VGVLFLIGMLGLTAYAVVLGA), 147–167 (LAYEVFLGLSLMGAVMLAGSL), 179–199 (VWFVVLQPLGAALFCIAGVAA), 238–258 (VLLVSALAVTLFFGGWLGPWL), 262–282 (IWFGLKTGVIAVVFVWLRATL), and 293–313 (FAWKIALPLSLANLLLTGIVV).

This sequence belongs to the complex I subunit 1 family. As to quaternary structure, NDH-1 is composed of 14 different subunits. Subunits NuoA, H, J, K, L, M, N constitute the membrane sector of the complex.

The protein localises to the cell inner membrane. The catalysed reaction is a quinone + NADH + 5 H(+)(in) = a quinol + NAD(+) + 4 H(+)(out). Its function is as follows. NDH-1 shuttles electrons from NADH, via FMN and iron-sulfur (Fe-S) centers, to quinones in the respiratory chain. The immediate electron acceptor for the enzyme in this species is believed to be ubiquinone. Couples the redox reaction to proton translocation (for every two electrons transferred, four hydrogen ions are translocated across the cytoplasmic membrane), and thus conserves the redox energy in a proton gradient. This subunit may bind ubiquinone. The protein is NADH-quinone oxidoreductase subunit H 1 of Rhodopseudomonas palustris (strain BisB5).